We begin with the raw amino-acid sequence, 421 residues long: Testin (421 aa).

Residues 92–199 (MILTNPVAAK…GDVKLPYEMG (108 aa)) enclose the PET domain. Residues 133 to 164 (EKQPVAGSEGAQYRKKQLAKQLPAHDQDPSKC) form a disordered region. The span at 155–164 (PAHDQDPSKC) shows a compositional bias: basic and acidic residues. LIM zinc-binding domains lie at 234-297 (YFCY…CDSE), 299-359 (PRCA…NHAV), and 362-421 (QGCH…KMMS).

Belongs to the prickle / espinas / testin family. In terms of assembly, interacts via LIM domain 1 with ZYX. Interacts (via LIM domain 3) with ENAH and VASP. Interacts with ALKBH4, talin, actin, alpha-actinin, GRIP1 and PXN. Interacts (via LIM domain 2) with ACTL7A (via N-terminus). Heterodimer with ACTL7A; the heterodimer interacts with ENAH to form a heterotrimer.

Its subcellular location is the cytoplasm. It localises to the cell junction. It is found in the focal adhesion. Its function is as follows. Scaffold protein that may play a role in cell adhesion, cell spreading and in the reorganization of the actin cytoskeleton. Plays a role in the regulation of cell proliferation. May act as a tumor suppressor. In Oryctolagus cuniculus (Rabbit), this protein is Testin (TES).